A 358-amino-acid polypeptide reads, in one-letter code: 3-dehydroquinate synthase (358 aa).

Residues aspartate 70 to lysine 75, glycine 104 to aspartate 108, threonine 128 to threonine 129, lysine 141, lysine 150, and cysteine 168 to threonine 171 each bind NAD(+). Glutamate 183, histidine 246, and histidine 263 together coordinate Zn(2+).

This sequence belongs to the sugar phosphate cyclases superfamily. Dehydroquinate synthase family. Co(2+) is required as a cofactor. The cofactor is Zn(2+). NAD(+) serves as cofactor.

The protein localises to the cytoplasm. It carries out the reaction 7-phospho-2-dehydro-3-deoxy-D-arabino-heptonate = 3-dehydroquinate + phosphate. It functions in the pathway metabolic intermediate biosynthesis; chorismate biosynthesis; chorismate from D-erythrose 4-phosphate and phosphoenolpyruvate: step 2/7. Functionally, catalyzes the conversion of 3-deoxy-D-arabino-heptulosonate 7-phosphate (DAHP) to dehydroquinate (DHQ). The sequence is that of 3-dehydroquinate synthase from Shewanella frigidimarina (strain NCIMB 400).